The following is a 258-amino-acid chain: Eukaryotic translation initiation factor 3 subunit J (258 aa).

Positions 1 to 11 (MAAAAAAAGDS) are enriched in low complexity. The segment at 1–108 (MAAAAAAAGD…LEEPEEPKVL (108 aa)) is disordered. At alanine 2 the chain carries N-acetylalanine. The tract at residues 2–69 (AAAAAAAGDS…KEEAEVKPEV (68 aa)) is sufficient for interaction with EIF3B. 3 positions are modified to phosphoserine: serine 11, serine 13, and serine 20. The segment covering 40-59 (EGEDEDEDVKDNWDDDDDEK) has biased composition (acidic residues). Positions 60–106 (KEEAEVKPEVKISEKKKIAEKIKEKERQQKKRQEEIKKRLEEPEEPK) are enriched in basic and acidic residues. Positions 70-135 (KISEKKKIAE…ESDLELAKET (66 aa)) form a coiled coil. Lysine 106 is covalently cross-linked (Glycyl lysine isopeptide (Lys-Gly) (interchain with G-Cter in SUMO2)). A Phosphothreonine modification is found at threonine 109. Phosphoserine is present on serine 127. The tract at residues 217 to 238 (SKAKKKKKGVVPGGGLKATMKD) is disordered. The tract at residues 243–258 (YGGYDGGYVQDYEDFM) is promotes stable association with the 40S ribosome. Residue tyrosine 254 is modified to Phosphotyrosine.

In terms of assembly, component of the eukaryotic translation initiation factor 3 (eIF-3) complex, which is composed of 13 subunits: EIF3A, EIF3B, EIF3C, EIF3D, EIF3E, EIF3F, EIF3G, EIF3H, EIF3I, EIF3J, EIF3K, EIF3L and EIF3M. The eIF-3 complex appears to include 3 stable modules: module A is composed of EIF3A, EIF3B, EIF3G and EIF3I; module B is composed of EIF3F, EIF3H, and EIF3M; and module C is composed of EIF3C, EIF3D, EIF3E, EIF3K and EIF3L. EIF3C of module C binds EIF3B of module A and EIF3H of module B, thereby linking the three modules. EIF3J is a labile subunit that binds to the eIF-3 complex via EIF3B. The eIF-3 complex interacts with RPS6KB1 under conditions of nutrient depletion. Mitogenic stimulation leads to binding and activation of a complex composed of MTOR and RPTOR, leading to phosphorylation and release of RPS6KB1 and binding of EIF4B to eIF-3. In terms of processing, phosphorylated. Phosphorylation is enhanced upon serum stimulation.

It localises to the cytoplasm. Component of the eukaryotic translation initiation factor 3 (eIF-3) complex, which is required for several steps in the initiation of protein synthesis. The eIF-3 complex associates with the 40S ribosome and facilitates the recruitment of eIF-1, eIF-1A, eIF-2:GTP:methionyl-tRNAi and eIF-5 to form the 43S pre-initiation complex (43S PIC). The eIF-3 complex stimulates mRNA recruitment to the 43S PIC and scanning of the mRNA for AUG recognition. The eIF-3 complex is also required for disassembly and recycling of post-termination ribosomal complexes and subsequently prevents premature joining of the 40S and 60S ribosomal subunits prior to initiation. The eIF-3 complex specifically targets and initiates translation of a subset of mRNAs involved in cell proliferation, including cell cycling, differentiation and apoptosis, and uses different modes of RNA stem-loop binding to exert either translational activation or repression. This Homo sapiens (Human) protein is Eukaryotic translation initiation factor 3 subunit J.